We begin with the raw amino-acid sequence, 189 residues long: GTP cyclohydrolase 1 (189 aa).

Cys78, His81, and Cys150 together coordinate Zn(2+).

The protein belongs to the GTP cyclohydrolase I family. Homomer.

It catalyses the reaction GTP + H2O = 7,8-dihydroneopterin 3'-triphosphate + formate + H(+). The protein operates within cofactor biosynthesis; 7,8-dihydroneopterin triphosphate biosynthesis; 7,8-dihydroneopterin triphosphate from GTP: step 1/1. The protein is GTP cyclohydrolase 1 of Lysinibacillus sphaericus (strain C3-41).